Here is a 186-residue protein sequence, read N- to C-terminus: Inner membrane-spanning protein YciB (186 aa).

5 helical membrane passes run 10-30, 47-67, 76-96, 121-141, and 149-169; these read IILF…AVAI, VEPL…ATLL, WKPT…QLMF, WGWT…AYHF, and FKLF…ALYL.

The protein belongs to the YciB family.

It localises to the cell inner membrane. Functionally, plays a role in cell envelope biogenesis, maintenance of cell envelope integrity and membrane homeostasis. In Acidovorax ebreus (strain TPSY) (Diaphorobacter sp. (strain TPSY)), this protein is Inner membrane-spanning protein YciB.